We begin with the raw amino-acid sequence, 221 residues long: Guanylate kinase (221 aa).

The 179-residue stretch at 20 to 198 folds into the Guanylate kinase-like domain; it reads GSLFMVVAPS…ALAELRTVVQ (179 aa). Residue 27–34 participates in ATP binding; sequence APSGAGKS.

It belongs to the guanylate kinase family.

The protein localises to the cytoplasm. The enzyme catalyses GMP + ATP = GDP + ADP. Essential for recycling GMP and indirectly, cGMP. The sequence is that of Guanylate kinase from Ralstonia nicotianae (strain ATCC BAA-1114 / GMI1000) (Ralstonia solanacearum).